The sequence spans 180 residues: Shikimate kinase (180 aa).

14 to 19 (GAGKSS) lines the ATP pocket. Mg(2+) is bound at residue S18. Residues D36, R60, and G82 each contribute to the substrate site. Residue R120 participates in ATP binding. R139 is a binding site for substrate.

It belongs to the shikimate kinase family. As to quaternary structure, monomer. Mg(2+) is required as a cofactor.

It localises to the cytoplasm. It carries out the reaction shikimate + ATP = 3-phosphoshikimate + ADP + H(+). It participates in metabolic intermediate biosynthesis; chorismate biosynthesis; chorismate from D-erythrose 4-phosphate and phosphoenolpyruvate: step 5/7. Functionally, catalyzes the specific phosphorylation of the 3-hydroxyl group of shikimic acid using ATP as a cosubstrate. This chain is Shikimate kinase, found in Xylella fastidiosa (strain 9a5c).